A 166-amino-acid polypeptide reads, in one-letter code: S-phase kinase-associated protein 1 homolog (166 aa).

Residues 105 to 166 (ILAANYLDIK…ENKWAEEATS (62 aa)) are interaction with the F-box domain of F-box proteins.

This sequence belongs to the SKP1 family. As to quaternary structure, component of multiple SCF (SKP1-CUL1-F-box) E3 ubiquitin-protein ligase complexes formed of CUL1, SKP1, RBX1 and a variable F-box domain-containing protein as substrate-specific subunit.

Its pathway is protein modification; protein ubiquitination. Essential component of the SCF (SKP1-CUL1-F-box protein) ubiquitin ligase complex, which mediates the ubiquitination of proteins involved in cell cycle progression, signal transduction and transcription. In the SCF complex, serves as an adapter that links the F-box protein to CUL1. The functional specificity of the SCF complex depends on the F-box protein as substrate recognition component. Its association with the holoenzyme telomerase ribonucleoprotein complex suggests that it may play a role in turnover of holoenzyme telomerase complex components. This Tetrahymena thermophila (strain SB210) protein is S-phase kinase-associated protein 1 homolog.